The sequence spans 743 residues: MDSDYIFHNGDDIRNMGLEEMRRQKVLLASELKAIDAQISDLAFNNYGTYADAGRATHDCSKTFGEMRDKTVNLSDQAEELTSAFVEFRAKAKQLSEEQDLVRKALDKSNPIWELLTLPSRMDICIRAGYYDLAYTLTNYGLQLQQQTQLYRNPLIKKVADHLVEARAYLLEELFNKFAGPLDLAESIKVVNNVRKMPSLTANQLRIAVLQHRDIYLEKQILDISGNVDMIVQAIEIYRTSMYDTLVLYLAVFPENEVVRKNPNADPRWESWPVLPPNSILSQWVISNVKKMLDLITKADVKSAVDLSAVWTKLMAMASSFGRMGIDFRPLIAGKLTKLIEQRFRQNVQEATSRLTGSSRDIVMIGIDPASLPQFETAPDSPPVAAAELSLWDDMTIYTNSVVDALNGLRFILTPVVLSTVVVSLRDSIRSILTWLASSHSNSANFSRAVRIVCTSVAPFFEKCVAFFFPPATVSKIFGSSISKRQYLQFIELDMKQLAASCDGAEKIEEIVKPLLQKRTLEEIGLENVLKPTKPEEEKTKFFLEETVEDGPGLAEPQEEASESVKEQETTSELEKKHGTDFETAETQEMVSEPVKEHETTSELTKEQEPAFEPEKLHETPPEPMEPQNFGESEAKAAHNPEAHLELGETSENQEIREQEHKEVVITSTEPEFHEIDLNSAVLIPKIAVEPQLDPISEYLTELTQDDPIEEEEGWGWGDDDGEEQEISSKEVESPKEKCKKDD.

Disordered stretches follow at residues 549–672 and 704–743; these read EDGP…TEPE and TQDDPIEEEEGWGWGDDDGEEQEISSKEVESPKEKCKKDD. 4 stretches are compositionally biased toward basic and acidic residues: residues 563–581, 594–621, 633–647, and 654–664; these read ESVKEQETTSELEKKHGTD, PVKEHETTSELTKEQEPAFEPEKLHETP, SEAKAAHNPEAHLEL, and QEIREQEHKEV. Positions 704–726 are enriched in acidic residues; sequence TQDDPIEEEEGWGWGDDDGEEQE. Over residues 727-743 the composition is skewed to basic and acidic residues; the sequence is ISSKEVESPKEKCKKDD.

The protein belongs to the COG8 family. As to quaternary structure, component of the conserved oligomeric Golgi complex which is composed of eight different subunits and is required for normal Golgi morphology and localization.

Its subcellular location is the golgi apparatus membrane. In terms of biological role, required for normal Golgi function. This Caenorhabditis elegans protein is Conserved oligomeric Golgi complex subunit 8 (cogc-8).